A 226-amino-acid chain; its full sequence is PKHD-type hydroxylase BP3529 (226 aa).

Residues 78–178 enclose the Fe2OG dioxygenase domain; that stretch reads KIFPPLFNRY…RISAFFWLQS (101 aa). Fe cation is bound by residues H96, D98, and H159. A 2-oxoglutarate-binding site is contributed by R169.

The cofactor is Fe(2+). It depends on L-ascorbate as a cofactor.

The polypeptide is PKHD-type hydroxylase BP3529 (Bordetella pertussis (strain Tohama I / ATCC BAA-589 / NCTC 13251)).